A 310-amino-acid chain; its full sequence is Glycerol-3-phosphate dehydrogenase [NAD(P)+] (310 aa).

NADPH-binding residues include tryptophan 19, arginine 39, arginine 40, and lysine 87. The sn-glycerol 3-phosphate site is built by lysine 87 and glycine 115. Serine 119 contributes to the NADPH binding site. Sn-glycerol 3-phosphate is bound by residues lysine 170, aspartate 223, serine 233, arginine 234, and asparagine 235. Residue lysine 170 is the Proton acceptor of the active site. An NADPH-binding site is contributed by arginine 234. Glutamate 260 is a binding site for NADPH.

This sequence belongs to the NAD-dependent glycerol-3-phosphate dehydrogenase family.

The protein resides in the cytoplasm. It carries out the reaction sn-glycerol 3-phosphate + NAD(+) = dihydroxyacetone phosphate + NADH + H(+). The enzyme catalyses sn-glycerol 3-phosphate + NADP(+) = dihydroxyacetone phosphate + NADPH + H(+). Its pathway is membrane lipid metabolism; glycerophospholipid metabolism. Catalyzes the reduction of the glycolytic intermediate dihydroxyacetone phosphate (DHAP) to sn-glycerol 3-phosphate (G3P), the key precursor for phospholipid synthesis. This chain is Glycerol-3-phosphate dehydrogenase [NAD(P)+], found in Synechococcus sp. (strain JA-3-3Ab) (Cyanobacteria bacterium Yellowstone A-Prime).